The chain runs to 496 residues: Transcription termination/antitermination protein NusA (496 aa).

Residues 135–200 enclose the S1 motif domain; that stretch reads GQIITGIVKK…RGAQLFISRS (66 aa). The KH domain occupies 302-370; sequence CHTMDIAVDI…KNLNINENII (69 aa). 2 repeat units span residues 364–414 and 440–490. Residues 364–490 form a 2 X 51 AA approximate repeats region; the sequence is NINENIIKIL…LLIMTARNIC (127 aa).

This sequence belongs to the NusA family. Monomer. Binds directly to the core enzyme of the DNA-dependent RNA polymerase and to nascent RNA.

It localises to the cytoplasm. In terms of biological role, participates in both transcription termination and antitermination. The sequence is that of Transcription termination/antitermination protein NusA from Buchnera aphidicola subsp. Acyrthosiphon pisum (strain APS) (Acyrthosiphon pisum symbiotic bacterium).